Consider the following 236-residue polypeptide: Phosphoribosylaminoimidazole-succinocarboxamide synthase (236 aa).

The protein belongs to the SAICAR synthetase family.

It catalyses the reaction 5-amino-1-(5-phospho-D-ribosyl)imidazole-4-carboxylate + L-aspartate + ATP = (2S)-2-[5-amino-1-(5-phospho-beta-D-ribosyl)imidazole-4-carboxamido]succinate + ADP + phosphate + 2 H(+). The protein operates within purine metabolism; IMP biosynthesis via de novo pathway; 5-amino-1-(5-phospho-D-ribosyl)imidazole-4-carboxamide from 5-amino-1-(5-phospho-D-ribosyl)imidazole-4-carboxylate: step 1/2. This is Phosphoribosylaminoimidazole-succinocarboxamide synthase from Pseudomonas paraeruginosa (strain DSM 24068 / PA7) (Pseudomonas aeruginosa (strain PA7)).